We begin with the raw amino-acid sequence, 1940 residues long: Myosin-2 (1940 aa).

Residues 33 to 82 (DAKTSVFVAEPKESFVKGTIQSREGGKVTVKTEGGATLTVKEDQVFPMNP) form the Myosin N-terminal SH3-like domain. 2 positions are modified to phosphothreonine: Thr64 and Thr69. A Myosin motor domain is found at 86 to 783 (DKIEDMAMMT…LLGLLEEMRD (698 aa)). An N6,N6,N6-trimethyllysine modification is found at Lys130. ATP is bound at residue 179-186 (GESGAGKT). Tyr389 carries the post-translational modification Phosphotyrosine. Residue Ser392 is modified to Phosphoserine. Position 419 is a phosphothreonine (Thr419). Residue Ser625 is modified to Phosphoserine. The segment at 660-682 (LNKLMTNLRSTHPHFVRCIIPNE) is actin-binding. At His758 the chain carries Pros-methylhistidine. Residues 762 to 776 (KFGHTKVFFKAGLLG) are actin-binding. The IQ domain maps to 786-815 (LAQLMTRTQARCRGFLARVEYQKMVERRES). A coiled-coil region spans residues 844 to 1940 (LLKSAETEKE…EVHTKIISEE (1097 aa)). A phosphoserine mark is found at Ser1093, Ser1097, Ser1163, and Ser1238. Thr1242 carries the phosphothreonine modification. Ser1244 carries the post-translational modification Phosphoserine. Phosphothreonine occurs at positions 1256 and 1287. 4 positions are modified to phosphoserine: Ser1289, Ser1293, Ser1304, and Ser1307. Phosphotyrosine is present on Tyr1465. Thr1468 is subject to Phosphothreonine. Tyr1493 is modified (phosphotyrosine). The residue at position 1496 (Ser1496) is a Phosphoserine. Thr1502 is subject to Phosphothreonine. Ser1515 bears the Phosphoserine mark. Residue Thr1518 is modified to Phosphothreonine. A phosphoserine mark is found at Ser1543, Ser1555, Ser1575, Ser1601, Ser1715, and Ser1727. Phosphothreonine is present on residues Thr1731 and Thr1737. Residues 1886–1905 (QAEEAEEQSNTNLSKFRKLQ) are disordered.

Belongs to the TRAFAC class myosin-kinesin ATPase superfamily. Myosin family. In terms of assembly, muscle myosin is a hexameric protein that consists of 2 heavy chain subunits (MHC), 2 alkali light chain subunits (MLC) and 2 regulatory light chain subunits (MLC-2). Interacts with GCSAM.

It is found in the cytoplasm. It localises to the myofibril. Myosins are actin-based motor molecules with ATPase activity essential for muscle contraction. The polypeptide is Myosin-2 (MYH2) (Bos taurus (Bovine)).